Reading from the N-terminus, the 183-residue chain is Adenylate kinase (183 aa).

Residue 12 to 17 (GAGKGT) coordinates ATP. Residues 32–61 (STGDLLRSEVAAGSELGKEAEAVMNRGELV) are NMP. Residues T33, R38, 59–61 (ELV), 86–89 (GFPR), and Q93 each bind AMP. Residues 127 to 133 (SRGRADD) form an LID region. R128 is a binding site for ATP. The AMP site is built by R130 and R141. Residue G169 participates in ATP binding.

Belongs to the adenylate kinase family. In terms of assembly, monomer.

It localises to the cytoplasm. It carries out the reaction AMP + ATP = 2 ADP. Its pathway is purine metabolism; AMP biosynthesis via salvage pathway; AMP from ADP: step 1/1. Functionally, catalyzes the reversible transfer of the terminal phosphate group between ATP and AMP. Plays an important role in cellular energy homeostasis and in adenine nucleotide metabolism. The chain is Adenylate kinase from Synechococcus sp. (strain CC9902).